A 317-amino-acid chain; its full sequence is Tyrosine--tRNA ligase (317 aa).

Tyr33 provides a ligand contact to L-tyrosine. A 'HIGH' region motif is present at residues Pro38–His46. 4 residues coordinate L-tyrosine: Tyr155, Gln159, Asp162, and Gln177. Positions Lys211–Ser215 match the 'KMSKS' region motif. Ser214 is an ATP binding site.

It belongs to the class-I aminoacyl-tRNA synthetase family. TyrS type 3 subfamily. Homodimer.

The protein localises to the cytoplasm. The catalysed reaction is tRNA(Tyr) + L-tyrosine + ATP = L-tyrosyl-tRNA(Tyr) + AMP + diphosphate + H(+). Its function is as follows. Catalyzes the attachment of tyrosine to tRNA(Tyr) in a two-step reaction: tyrosine is first activated by ATP to form Tyr-AMP and then transferred to the acceptor end of tRNA(Tyr). The chain is Tyrosine--tRNA ligase from Methanococcoides burtonii (strain DSM 6242 / NBRC 107633 / OCM 468 / ACE-M).